The sequence spans 95 residues: MSDSIETAPVNTPAARRTAVGARRPFYRRRKACPFSGPNAPKIDYKDVRLLSRFLSERGKIVPSRITAVSAKKQRELARAIKRARFLALLPYVVD.

Belongs to the bacterial ribosomal protein bS18 family. Part of the 30S ribosomal subunit. Forms a tight heterodimer with protein bS6.

Functionally, binds as a heterodimer with protein bS6 to the central domain of the 16S rRNA, where it helps stabilize the platform of the 30S subunit. The chain is Small ribosomal subunit protein bS18 from Acidiphilium cryptum (strain JF-5).